A 622-amino-acid polypeptide reads, in one-letter code: Dynein axonemal assembly factor 1 (622 aa).

Over residues 1 to 11 (MHPEVSEQQAD) the composition is skewed to polar residues. The tract at residues 1–80 (MHPEVSEQQA…ARNDRDDRGP (80 aa)) is disordered. The segment covering 32–42 (VRKEEINETKE) has biased composition (basic and acidic residues). The span at 48–59 (STTSCQSQKQQS) shows a compositional bias: low complexity. Over residues 62 to 80 (SRLDCRSGYARNDRDDRGP) the composition is skewed to basic and acidic residues. 6 LRR repeats span residues 101–123 (ALND…EEYT), 124–145 (GLRC…QAQS), 146–167 (ELRC…EPLQ), 168–189 (KLDA…SCLP), 190–211 (VLNT…QHLR), and 215–236 (RLCV…SVLE). One can recognise an LRRCT domain in the interval 249-288 (NPVTKHIPNYRRTVTVRLKQLTYLDDRPVFPKDRACAEAW). Over residues 326–336 (EERKKARDKGE) the composition is skewed to basic and acidic residues. Disordered regions lie at residues 326-360 (EERK…PLGE) and 399-431 (EEPD…TDGT). Low complexity-rich tracts occupy residues 337-351 (TPLP…TSPE) and 415-428 (VATA…VAAT). Ser-349 carries the post-translational modification Phosphoserine. Phosphoserine is present on residues Ser-464 and Ser-487. Disordered regions lie at residues 480 to 503 (ISSL…EHTP) and 525 to 622 (RVPL…FGLD). Residues 539–550 (APETQGQVFSTT) are compositionally biased toward polar residues.

This sequence belongs to the DNAAF1 family.

Its subcellular location is the cell projection. The protein localises to the cilium. Functionally, cilium-specific protein required for the stability of the ciliary architecture. Plays a role in cytoplasmic preassembly of dynein arms. Involved in regulation of microtubule-based cilia and actin-based brush border microvilli. The polypeptide is Dynein axonemal assembly factor 1 (Dnaaf1) (Peromyscus polionotus (Oldfield mouse)).